Here is a 151-residue protein sequence, read N- to C-terminus: Histone H2A.2.1 (151 aa).

N-acetylmethionine is present on M1. Disordered regions lie at residues 1–22 (MDGS…KKSV) and 129–151 (EKAE…PKKA). 2 consecutive short sequence motifs (SPKK motif) follow at residues 140-143 (SPKK) and 147-150 (SPKK). Residues 140-151 (SPKKTTKSPKKA) show a composition bias toward basic residues.

Belongs to the histone H2A family. As to quaternary structure, the nucleosome is a histone octamer containing two molecules each of H2A, H2B, H3 and H4 assembled in one H3-H4 heterotetramer and two H2A-H2B heterodimers. The octamer wraps approximately 147 bp of DNA. In terms of processing, phosphorylated within its C-terminal part, probably at the SPKK motifs.

Its subcellular location is the nucleus. The protein resides in the chromosome. In terms of biological role, core component of nucleosome. Nucleosomes wrap and compact DNA into chromatin, limiting DNA accessibility to the cellular machineries which require DNA as a template. Histones thereby play a central role in transcription regulation, DNA repair, DNA replication and chromosomal stability. DNA accessibility is regulated via a complex set of post-translational modifications of histones, also called histone code, and nucleosome remodeling. This is Histone H2A.2.1 from Triticum aestivum (Wheat).